The sequence spans 195 residues: Peptidyl-tRNA hydrolase (195 aa).

Tyr17 is a tRNA binding site. Catalysis depends on His22, which acts as the Proton acceptor. TRNA is bound by residues Tyr68, Asn70, and Asn116.

It belongs to the PTH family. As to quaternary structure, monomer.

It localises to the cytoplasm. It carries out the reaction an N-acyl-L-alpha-aminoacyl-tRNA + H2O = an N-acyl-L-amino acid + a tRNA + H(+). Its function is as follows. Hydrolyzes ribosome-free peptidyl-tRNAs (with 1 or more amino acids incorporated), which drop off the ribosome during protein synthesis, or as a result of ribosome stalling. Functionally, catalyzes the release of premature peptidyl moieties from peptidyl-tRNA molecules trapped in stalled 50S ribosomal subunits, and thus maintains levels of free tRNAs and 50S ribosomes. The sequence is that of Peptidyl-tRNA hydrolase from Shewanella putrefaciens (strain CN-32 / ATCC BAA-453).